Here is a 268-residue protein sequence, read N- to C-terminus: uncharacterized protein (268 aa).

The N-terminal stretch at 1-18 is a signal peptide; the sequence is MRGFLLLSLGVFSFSALA. 2 domain regions span residues 24 to 184 and 185 to 268; these read SHDL…ELLP and SPAT…NWLR. A disulfide bond links cysteine 110 and cysteine 115.

As to quaternary structure, monomer.

It is found in the periplasm. This is an uncharacterized protein from Pseudomonas aeruginosa (strain ATCC 15692 / DSM 22644 / CIP 104116 / JCM 14847 / LMG 12228 / 1C / PRS 101 / PAO1).